Reading from the N-terminus, the 142-residue chain is Probable histone H2AXb (142 aa).

Positions 1–12 (MSSGAGSGTTKG) are enriched in gly residues. Residues 1–28 (MSSGAGSGTTKGGRGKPKATKSVSRSSK) are disordered. Ser139 is modified (phosphoserine; by ATM and ATR). The [ST]-Q motif signature appears at 139 to 140 (SQ).

This sequence belongs to the histone H2A family. As to quaternary structure, the nucleosome is a histone octamer containing two molecules each of H2A, H2B, H3 and H4 assembled in one H3-H4 heterotetramer and two H2A-H2B heterodimers. The octamer wraps approximately 147 bp of DNA. Interacts with numerous proteins required for DNA damage signaling and repair when phosphorylated on Ser-139. Phosphorylated to form H2AXS139ph (gamma-H2AX) in response to DNA double strand breaks (DSBs) generated by exogenous genotoxic agents and by stalled replication forks, and may also occur during meiotic recombination events. Phosphorylation can extend up to several thousand nucleosomes from the actual site of the DSB and may mark the surrounding chromatin for recruitment of proteins required for DNA damage signaling and repair. Widespread phosphorylation may also serve to amplify the damage signal or aid repair of persistent lesions. H2AXS139ph in response to ionizing radiation is mediated by ATM while defects in DNA replication induce H2AXS139ph subsequent to activation of ATR. Dephosphorylation of H2AXS139ph by PP2A is required for DNA DSB repair. Expressed in meristems and dividing cells.

It is found in the nucleus. Its subcellular location is the chromosome. Variant histone H2A which replaces conventional H2A in a subset of nucleosomes. Nucleosomes wrap and compact DNA into chromatin, limiting DNA accessibility to the cellular machineries which require DNA as a template. Histones thereby play a central role in transcription regulation, DNA repair, DNA replication and chromosomal stability. DNA accessibility is regulated via a complex set of post-translational modifications of histones, also called histone code, and nucleosome remodeling. Required for checkpoint-mediated arrest of cell cycle progression in response to low doses of ionizing radiation and for efficient repair of DNA double strand breaks (DSBs) specifically when modified by C-terminal phosphorylation. The protein is Probable histone H2AXb of Arabidopsis thaliana (Mouse-ear cress).